The sequence spans 514 residues: Cytochrome P450 monooxygenase FUS8 (514 aa).

Residues 24–44 (VFENLTVTNTVCAFIALFIIV) form a helical membrane-spanning segment. Residues Asn225 and Asn443 are each glycosylated (N-linked (GlcNAc...) asparagine). Cys460 provides a ligand contact to heme.

Belongs to the cytochrome P450 family. The cofactor is heme.

The protein resides in the membrane. It functions in the pathway mycotoxin biosynthesis. Cytochrome P450 monooxygenase; part of the gene cluster that mediates the biosynthesis of the mycotoxin fusarin C. Within the cluster, FUS1, FUS2, FUS8 and FUS9 are sufficient for fusarin production. The roles of the other FUS members are yet undetermined. The fusarin C synthetase FUS1 is responsible for the condensation of one acetyl-coenzyme A (CoA) unit with six malonyl-CoA units and the amide linkage of the arising heptaketide and homoserine, subsequently releasing the first intermediate, prefusarin, as an alcohol with an open ring structure. The cytochrome P450 monooxygenase FUS8 participates in multiple oxidation processes at carbon C-20 and is able to use the FUS1 product as substrate, resulting in formation of 20-hydroxy-prefusarin. This reaction seems to be essential before the 2-pyrrolidone ring closure can be catalyzed by FUS2, generating 20-hydroxy-fusarin. FUS8 is able to further oxidizes carbon C-20 after ring closure, resulting in the formation of carboxy-fusarin C. As the last step, FUS9 methylates the hydroxyl group at C-21 to generate fusarin C. Fusarin C can then rearrange to epi-fusarin C, the (z)-isomers, and fusarin A and fusarin D. The chain is Cytochrome P450 monooxygenase FUS8 from Gibberella fujikuroi (strain CBS 195.34 / IMI 58289 / NRRL A-6831) (Bakanae and foot rot disease fungus).